We begin with the raw amino-acid sequence, 237 residues long: DCN1-like protein 5 (237 aa).

3 positions are modified to phosphoserine: Ser9, Ser41, and Ser48. A DCUN1 domain is found at Phe46–Lys232.

Part of a complex that contains DCUN1D5, CUL1 and RBX1; this interaction is bridged by CUL1. Interacts (via the DCUN1 domain) with the unneddylated cullins: interacts with CUL1, CUL2, CUL3, CUL4A, CUL4B and CUL5; these interactions promote the cullin neddylation and the identity of the cullin dictates the affinity of the interaction. Interacts (via DCUN1 domain) with UBE2M (N-terminally acetylated form) and probably with UBE2F (N-terminally acetylated form). May also interact with regulators or subunits of cullin-RING ligases such as RBX1, RNF7, ELOB and DDB1; these interactions are bridged by cullins. Interacts with CAND1; this interaction is bridged by cullins and strongly inhibits the neddylation of cullins. These CAND-cullin-DCNL complexes can only be neddylated in the presence of a substrate adapter. In terms of processing, phosphorylation at Ser-41 is independent of cullin's interaction. Phosphorylated in response to both TICAM1 and MYD88 dependent Toll-like receptor (TLR) pathway activation. Phosphorylated in response to IL1B stimulation. In terms of tissue distribution, weakly expressed in testis, skin and immune tissues (thymus, spleen and lymph nodes).

The protein localises to the nucleus. It is found in the cytoplasm. The protein resides in the cytoskeleton. It localises to the spindle. In terms of biological role, contributes to the neddylation of all cullins by transferring NEDD8 from N-terminally acetylated NEDD8-conjugating E2s enzyme to different cullin C-terminal domain-RBX complexes which is necessary for the activation of cullin-RING E3 ubiquitin ligases (CRLs). May play a role in DNA damage response and may participate in cell proliferation and anchorage-independent cell growth. The polypeptide is DCN1-like protein 5 (Homo sapiens (Human)).